The primary structure comprises 409 residues: Elongation factor Tu (409 aa).

The tr-type G domain maps to 10-214 (KPHVNIGTIG…AVDSYIPDPE (205 aa)). A G1 region spans residues 19–26 (GHVDHGKT). 19–26 (GHVDHGKT) contacts GTP. Mg(2+) is bound at residue threonine 26. Positions 60 to 64 (GITIN) are G2. The tract at residues 81-84 (DCPG) is G3. GTP-binding positions include 81-85 (DCPGH) and 136-139 (NKED). The segment at 136–139 (NKED) is G4. The tract at residues 174–176 (SGL) is G5.

It belongs to the TRAFAC class translation factor GTPase superfamily. Classic translation factor GTPase family. EF-Tu/EF-1A subfamily. Monomer.

It is found in the cytoplasm. The catalysed reaction is GTP + H2O = GDP + phosphate + H(+). Its function is as follows. GTP hydrolase that promotes the GTP-dependent binding of aminoacyl-tRNA to the A-site of ribosomes during protein biosynthesis. The polypeptide is Elongation factor Tu (Trichormus variabilis (strain ATCC 29413 / PCC 7937) (Anabaena variabilis)).